We begin with the raw amino-acid sequence, 129 residues long: Lysozyme C (129 aa).

The C-type lysozyme domain maps to 1-129 (KVYGRCELAA…VNAWTRGCRL (129 aa)). Cystine bridges form between C6–C127, C30–C115, C64–C80, and C76–C94. Residues E35 and D52 contribute to the active site.

This sequence belongs to the glycosyl hydrolase 22 family. In terms of assembly, monomer.

The protein resides in the secreted. The enzyme catalyses Hydrolysis of (1-&gt;4)-beta-linkages between N-acetylmuramic acid and N-acetyl-D-glucosamine residues in a peptidoglycan and between N-acetyl-D-glucosamine residues in chitodextrins.. Functionally, lysozymes have primarily a bacteriolytic function; those in tissues and body fluids are associated with the monocyte-macrophage system and enhance the activity of immunoagents. This Syrmaticus soemmerringii (Copper pheasant) protein is Lysozyme C (LYZ).